A 213-amino-acid polypeptide reads, in one-letter code: MNESLLTQFGNSLTRVEKALENLKNGKGVLLVDDENRENEGDLIFPAETITVPQMAMLIRECSGIVCLCLTDEKVKKLGLTQMVSNNTCTYETAFTISIEAKEGVTTGVSAADRVTTILTAVKDDCKPEDLCHPGHVFPLRARAGGVLTRPGHTEGTVDLMRLAGYNPAGILCELTNPDGTMARLPQIINFAKKHNLTILSIEDIIKYKEIVT.

D-ribulose 5-phosphate contacts are provided by residues arginine 37–glutamate 38, aspartate 42, arginine 150–threonine 154, and glutamate 174. Position 38 (glutamate 38) interacts with Mg(2+). Residue histidine 153 coordinates Mg(2+).

Belongs to the DHBP synthase family. As to quaternary structure, homodimer. Mg(2+) serves as cofactor. Requires Mn(2+) as cofactor.

The catalysed reaction is D-ribulose 5-phosphate = (2S)-2-hydroxy-3-oxobutyl phosphate + formate + H(+). The protein operates within cofactor biosynthesis; riboflavin biosynthesis; 2-hydroxy-3-oxobutyl phosphate from D-ribulose 5-phosphate: step 1/1. Its function is as follows. Catalyzes the conversion of D-ribulose 5-phosphate to formate and 3,4-dihydroxy-2-butanone 4-phosphate. This chain is 3,4-dihydroxy-2-butanone 4-phosphate synthase, found in Clostridium botulinum (strain Langeland / NCTC 10281 / Type F).